Consider the following 126-residue polypeptide: Histone H2B type 1-D (126 aa).

Positions 1–12 (MPEPTKSAPAPK) are enriched in low complexity. A disordered region spans residues 1–36 (MPEPTKSAPAPKKGSKKAVTKAQKKDGKKRKRSRKE). Pro2 is subject to N-acetylproline. Glu3 carries the ADP-ribosyl glutamic acid modification. At Lys6 the chain carries N6-(2-hydroxyisobutyryl)lysine; alternate. Lys6 is modified (N6-(beta-hydroxybutyryl)lysine; alternate). Position 6 is an N6-acetyllysine; alternate (Lys6). Lys6 is modified (N6-butyryllysine; alternate). An N6-crotonyllysine; alternate modification is found at Lys6. An N6-lactoyllysine; alternate modification is found at Lys6. Lys6 participates in a covalent cross-link: Glycyl lysine isopeptide (Lys-Gly) (interchain with G-Cter in SUMO2); alternate. Ser7 is modified (ADP-ribosylserine). Residue Lys12 is modified to N6-(beta-hydroxybutyryl)lysine; alternate. Residues Lys12 and Lys13 each carry the N6-acetyllysine; alternate modification. N6-crotonyllysine; alternate is present on residues Lys12 and Lys13. Lys12 carries the post-translational modification N6-lactoyllysine; alternate. Lys13 is modified (N6-(2-hydroxyisobutyryl)lysine; alternate). The residue at position 15 (Ser15) is a Phosphoserine; by STK4/MST1. N6-acetyllysine; alternate occurs at positions 16, 17, 21, and 24. N6-crotonyllysine; alternate is present on residues Lys16, Lys17, Lys21, and Lys24. An N6-lactoyllysine; alternate mark is found at Lys16, Lys17, Lys21, and Lys24. 2 positions are modified to N6-(beta-hydroxybutyryl)lysine; alternate: Lys17 and Lys21. At Lys17 the chain carries N6-glutaryllysine; alternate. Lys21 and Lys24 each carry N6-(2-hydroxyisobutyryl)lysine; alternate. N6-butyryllysine; alternate is present on Lys21. A Glycyl lysine isopeptide (Lys-Gly) (interchain with G-Cter in SUMO2); alternate cross-link involves residue Lys21. An N6-(2-hydroxyisobutyryl)lysine modification is found at Lys25. The residue at position 35 (Lys35) is an N6-(2-hydroxyisobutyryl)lysine; alternate. Residue Lys35 is modified to N6-(beta-hydroxybutyryl)lysine; alternate. Lys35 carries the post-translational modification N6-crotonyllysine; alternate. Position 35 is an N6-glutaryllysine; alternate (Lys35). N6-succinyllysine; alternate is present on Lys35. A Glycyl lysine isopeptide (Lys-Gly) (interchain with G-Cter in ubiquitin); alternate cross-link involves residue Lys35. Glu36 is subject to PolyADP-ribosyl glutamic acid. At Ser37 the chain carries Phosphoserine; by AMPK. Lys44, Lys47, and Lys58 each carry N6-(2-hydroxyisobutyryl)lysine; alternate. N6-lactoyllysine; alternate is present on Lys44. An N6-glutaryllysine; alternate mark is found at Lys44 and Lys47. At Lys47 the chain carries N6-methyllysine; alternate. Residue Lys58 is modified to N6,N6-dimethyllysine; alternate. Arg80 bears the Dimethylated arginine mark. At Lys86 the chain carries N6-(2-hydroxyisobutyryl)lysine; alternate. Lys86 is modified (N6-(beta-hydroxybutyryl)lysine; alternate). Position 86 is an N6-acetyllysine; alternate (Lys86). N6-lactoyllysine; alternate is present on Lys86. An N6,N6,N6-trimethyllysine; alternate modification is found at Lys86. Arg87 and Arg93 each carry omega-N-methylarginine. At Lys109 the chain carries N6-(2-hydroxyisobutyryl)lysine; alternate. Lys109 carries the post-translational modification N6-lactoyllysine; alternate. Lys109 is subject to N6-glutaryllysine; alternate. At Lys109 the chain carries N6-methyllysine; alternate. Ser113 carries O-linked (GlcNAc) serine glycosylation. Thr116 is modified (phosphothreonine). An N6-(2-hydroxyisobutyryl)lysine; alternate mark is found at Lys117 and Lys121. Lys117 and Lys121 each carry N6-(beta-hydroxybutyryl)lysine; alternate. Lys117 and Lys121 each carry N6-lactoyllysine; alternate. Lys117 and Lys121 each carry N6-glutaryllysine; alternate. N6-succinyllysine; alternate is present on residues Lys117 and Lys121. Residue Lys117 is modified to N6-malonyllysine; alternate. Lys117 bears the N6-methylated lysine; alternate mark. Lys121 is covalently cross-linked (Glycyl lysine isopeptide (Lys-Gly) (interchain with G-Cter in ubiquitin); alternate).

The protein belongs to the histone H2B family. The nucleosome is a histone octamer containing two molecules each of H2A, H2B, H3 and H4 assembled in one H3-H4 heterotetramer and two H2A-H2B heterodimers. The octamer wraps approximately 147 bp of DNA. Monoubiquitination at Lys-35 (H2BK34Ub) by the MSL1/MSL2 dimer is required for histone H3 'Lys-4' (H3K4me) and 'Lys-79' (H3K79me) methylation and transcription activation at specific gene loci, such as HOXA9 and MEIS1 loci. Similarly, monoubiquitination at Lys-121 (H2BK120Ub) by the RNF20/40 complex gives a specific tag for epigenetic transcriptional activation and is also prerequisite for histone H3 'Lys-4' and 'Lys-79' methylation. It also functions cooperatively with the FACT dimer to stimulate elongation by RNA polymerase II. H2BK120Ub also acts as a regulator of mRNA splicing: deubiquitination by USP49 is required for efficient cotranscriptional splicing of a large set of exons. In terms of processing, phosphorylation at Ser-37 (H2BS36ph) by AMPK in response to stress promotes transcription. Phosphorylated on Ser-15 (H2BS14ph) by STK4/MST1 during apoptosis; which facilitates apoptotic chromatin condensation. Also phosphorylated on Ser-15 in response to DNA double strand breaks (DSBs), and in correlation with somatic hypermutation and immunoglobulin class-switch recombination. Post-translationally, glcNAcylation at Ser-113 promotes monoubiquitination of Lys-121. It fluctuates in response to extracellular glucose, and associates with transcribed genes. ADP-ribosylated by PARP1 or PARP2 on Ser-7 (H2BS6ADPr) in response to DNA damage. H2BS6ADPr promotes recruitment of CHD1L. Mono-ADP-ribosylated on Glu-3 (H2BE2ADPr) by PARP3 in response to single-strand breaks. Poly ADP-ribosylation on Glu-36 (H2BE35ADPr) by PARP1 regulates adipogenesis: it inhibits phosphorylation at Ser-37 (H2BS36ph), thereby blocking expression of pro-adipogenetic genes. In terms of processing, crotonylation (Kcr) is specifically present in male germ cells and marks testis-specific genes in post-meiotic cells, including X-linked genes that escape sex chromosome inactivation in haploid cells. Crotonylation marks active promoters and enhancers and confers resistance to transcriptional repressors. It is also associated with post-meiotically activated genes on autosomes. Post-translationally, lactylated in macrophages by EP300/P300 by using lactoyl-CoA directly derived from endogenous or exogenous lactate, leading to stimulates gene transcription.

The protein resides in the nucleus. It localises to the chromosome. Functionally, core component of nucleosome. Nucleosomes wrap and compact DNA into chromatin, limiting DNA accessibility to the cellular machineries which require DNA as a template. Histones thereby play a central role in transcription regulation, DNA repair, DNA replication and chromosomal stability. DNA accessibility is regulated via a complex set of post-translational modifications of histones, also called histone code, and nucleosome remodeling. In Homo sapiens (Human), this protein is Histone H2B type 1-D.